The chain runs to 596 residues: Aspartate--tRNA(Asp/Asn) ligase (596 aa).

E175 lines the L-aspartate pocket. The interval 199-202 (QQYK) is aspartate. R221 and H454 together coordinate L-aspartate. 221–223 (RDE) lines the ATP pocket. E488 contacts ATP. R495 lines the L-aspartate pocket. ATP is bound at residue 540 to 543 (GVDR).

This sequence belongs to the class-II aminoacyl-tRNA synthetase family. Type 1 subfamily. As to quaternary structure, homodimer.

Its subcellular location is the cytoplasm. The enzyme catalyses tRNA(Asx) + L-aspartate + ATP = L-aspartyl-tRNA(Asx) + AMP + diphosphate. Aspartyl-tRNA synthetase with relaxed tRNA specificity since it is able to aspartylate not only its cognate tRNA(Asp) but also tRNA(Asn). Reaction proceeds in two steps: L-aspartate is first activated by ATP to form Asp-AMP and then transferred to the acceptor end of tRNA(Asp/Asn). The sequence is that of Aspartate--tRNA(Asp/Asn) ligase from Bartonella bacilliformis (strain ATCC 35685 / KC583 / Herrer 020/F12,63).